A 182-amino-acid polypeptide reads, in one-letter code: Isopentenyl-diphosphate Delta-isomerase (182 aa).

Positions 25 and 32 each coordinate Mn(2+). The active site involves cysteine 67. A Mn(2+)-binding site is contributed by histidine 69. Glutamate 87 contacts Mg(2+). The Mn(2+) site is built by glutamate 114 and glutamate 116. Residue glutamate 116 is part of the active site.

This sequence belongs to the IPP isomerase type 1 family. As to quaternary structure, homodimer. Requires Mg(2+) as cofactor. Mn(2+) serves as cofactor.

Its subcellular location is the cytoplasm. It catalyses the reaction isopentenyl diphosphate = dimethylallyl diphosphate. It participates in isoprenoid biosynthesis; dimethylallyl diphosphate biosynthesis; dimethylallyl diphosphate from isopentenyl diphosphate: step 1/1. In terms of biological role, catalyzes the 1,3-allylic rearrangement of the homoallylic substrate isopentenyl (IPP) to its highly electrophilic allylic isomer, dimethylallyl diphosphate (DMAPP). The protein is Isopentenyl-diphosphate Delta-isomerase of Escherichia coli (strain K12 / MC4100 / BW2952).